The following is a 368-amino-acid chain: tRNA-specific 2-thiouridylase MnmA (368 aa).

ATP-binding positions include 12-19 and M38; that span reads GMSGGVDS. Positions 98–100 are interaction with target base in tRNA; the sequence is NPD. C103 acts as the Nucleophile in catalysis. A disulfide bridge connects residues C103 and C200. G128 is a binding site for ATP. Residues 150–152 are interaction with tRNA; the sequence is KDQ. The active-site Cysteine persulfide intermediate is the C200. Residues 313–314 form an interaction with tRNA region; sequence RY.

This sequence belongs to the MnmA/TRMU family. Interacts with TusE.

Its subcellular location is the cytoplasm. It catalyses the reaction S-sulfanyl-L-cysteinyl-[protein] + uridine(34) in tRNA + AH2 + ATP = 2-thiouridine(34) in tRNA + L-cysteinyl-[protein] + A + AMP + diphosphate + H(+). Catalyzes the 2-thiolation of uridine at the wobble position (U34) of tRNA(Lys), tRNA(Glu) and tRNA(Gln), leading to the formation of s(2)U34, the first step of tRNA-mnm(5)s(2)U34 synthesis. Sulfur is provided by IscS, via a sulfur-relay system. Binds ATP and its substrate tRNAs. This chain is tRNA-specific 2-thiouridylase MnmA, found in Pectobacterium carotovorum subsp. carotovorum (strain PC1).